Here is a 360-residue protein sequence, read N- to C-terminus: ACT1-like protein (360 aa).

The tract at residues 339 to 360 is disordered; sequence KKQSHNNANDHHEDSMNYSITQ.

Interacts with the receptor complex composed of ilcr-1 and ilcr-2. Also interacts with pik-1. Expressed in neurons.

May act as an adapter to facilitate downstream signaling for the receptor complex composed of ilcr-1 and ilcr-2, which is a signaling complex that modulates neuronal activity and animal behavior in response to sensory neuron input. This is ACT1-like protein from Caenorhabditis elegans.